A 462-amino-acid polypeptide reads, in one-letter code: Argininosuccinate lyase (462 aa).

The protein belongs to the lyase 1 family. Argininosuccinate lyase subfamily.

The protein localises to the cytoplasm. It catalyses the reaction 2-(N(omega)-L-arginino)succinate = fumarate + L-arginine. The protein operates within amino-acid biosynthesis; L-arginine biosynthesis; L-arginine from L-ornithine and carbamoyl phosphate: step 3/3. This chain is Argininosuccinate lyase, found in Hydrogenovibrio crunogenus (strain DSM 25203 / XCL-2) (Thiomicrospira crunogena).